Reading from the N-terminus, the 401-residue chain is Phosphoglycerate kinase (401 aa).

Substrate-binding positions include 24–26, R40, 63–66, R122, and R155; these read DFN and HFGR. ATP is bound by residues K206, G297, E328, and 357–360; that span reads GGDS.

Belongs to the phosphoglycerate kinase family. In terms of assembly, monomer.

It localises to the cytoplasm. The catalysed reaction is (2R)-3-phosphoglycerate + ATP = (2R)-3-phospho-glyceroyl phosphate + ADP. Its pathway is carbohydrate degradation; glycolysis; pyruvate from D-glyceraldehyde 3-phosphate: step 2/5. This Prochlorococcus marinus (strain NATL2A) protein is Phosphoglycerate kinase.